We begin with the raw amino-acid sequence, 491 residues long: Probable diguanylate cyclase CdgI (491 aa).

At 1-54 the chain is on the cytoplasmic side; it reads MIQSTRISMGLFFKYFLSLTKIDPGQNYISLPSIKSSTHIALLFMVSMGTQKLK. Residues 55-75 traverse the membrane as a helical segment; the sequence is AQSFFIFSLLLTLILFCITTL. The Periplasmic segment spans residues 76-89; that stretch reads YNENTNVKLIPQMN. Residues 90–110 form a helical membrane-spanning segment; it reads YLMVVVALFFLNAVIFLFMLM. Residues 111–121 are Cytoplasmic-facing; that stretch reads KYFTNKQILPT. Residues 122 to 142 form a helical membrane-spanning segment; the sequence is LILSLAFLSGLIYLVETIVII. The Periplasmic segment spans residues 143-158; that stretch reads HKPINGSTLIQTKSND. A helical transmembrane segment spans residues 159–179; it reads VSIFYIFRQLSFICLTSLALF. The Cytoplasmic segment spans residues 180 to 193; the sequence is CYGKDNILDNNKKK. Residues 194–214 traverse the membrane as a helical segment; the sequence is TGILLLALIPFLVFPLLAHNL. Residues 215–236 lie on the Periplasmic side of the membrane; that stretch reads SSYNADYSLYVVDYCPDNHTAT. A helical transmembrane segment spans residues 237-257; sequence WGINYTKILVCLWAFLLFFII. Residues 258-265 lie on the Cytoplasmic side of the membrane; sequence MRTRLASE. A helical membrane pass occupies residues 266 to 286; sequence LWPLIALLCLASLCCNLLLLT. Residues 287–293 are Periplasmic-facing; it reads LDEYNYT. Residues 294 to 314 traverse the membrane as a helical segment; sequence IWYISRGIEVSSKLFVVSFLI. The Cytoplasmic segment spans residues 315–491; it reads YNIFQELQLS…GGNKVIIHHI (177 aa). One can recognise a GGDEF domain in the interval 356-491; it reads KDFCVMLVDI…GGNKVIIHHI (136 aa). Residues aspartate 364 and isoleucine 365 each contribute to the Mg(2+) site. Residues asparagine 372, histidine 377, and aspartate 381 each coordinate substrate. Position 407 (glutamate 407) interacts with Mg(2+). Glutamate 407 functions as the Proton acceptor in the catalytic mechanism. Residue arginine 427 coordinates substrate.

In terms of assembly, homodimer. Mg(2+) is required as a cofactor.

The protein localises to the cell inner membrane. The catalysed reaction is 2 GTP = 3',3'-c-di-GMP + 2 diphosphate. It functions in the pathway purine metabolism; 3',5'-cyclic di-GMP biosynthesis. Catalyzes the synthesis of cyclic-di-GMP (c-di-GMP) via the condensation of 2 GTP molecules. The chain is Probable diguanylate cyclase CdgI from Escherichia coli (strain K12).